The following is a 22-amino-acid chain: Leptoglycin (22 aa).

The segment at 1–22 (GLLGGLLGPLLGGGGGGGGGLL) is disordered.

Expressed by the skin glands.

The protein resides in the secreted. In terms of biological role, antimicrobial protein. Has antibacterial activity against the Gram-negative bacteria E.coli ATCC 28922 (MIC=50 uM), P.aeruginosa ATCC 9027 (MIC=8 uM) and C.freundii ATCC 8090 (MIC=75 uM). Does not have hemolytic activity. The sequence is that of Leptoglycin from Leptodactylus pentadactylus (Smokey jungle frog).